The following is a 288-amino-acid chain: Structure-specific endonuclease subunit SLX1 (288 aa).

The GIY-YIG domain occupies 10 to 93; that stretch reads DFYCSYLLRS…QHSYKTRFIE (84 aa). An SLX1-type zinc finger spans residues 209-265; it reads CMICDKKIDYIHDEGTQMVGFCSDDECDFLSCLSCLYKEFTKNSKQIIPKSGHCPNC.

Belongs to the SLX1 family. Forms a heterodimer with SLX4. It depends on a divalent metal cation as a cofactor.

It is found in the nucleus. Its function is as follows. Catalytic subunit of the SLX1-SLX4 structure-specific endonuclease that resolves DNA secondary structures generated during DNA repair and recombination. Has endonuclease activity towards branched DNA substrates, introducing single-strand cuts in duplex DNA close to junctions with ss-DNA. This Kluyveromyces lactis (strain ATCC 8585 / CBS 2359 / DSM 70799 / NBRC 1267 / NRRL Y-1140 / WM37) (Yeast) protein is Structure-specific endonuclease subunit SLX1.